The primary structure comprises 172 residues: Translation initiation factor IF-3 (172 aa).

It belongs to the IF-3 family. In terms of assembly, monomer.

The protein localises to the cytoplasm. In terms of biological role, IF-3 binds to the 30S ribosomal subunit and shifts the equilibrium between 70S ribosomes and their 50S and 30S subunits in favor of the free subunits, thus enhancing the availability of 30S subunits on which protein synthesis initiation begins. This Bartonella henselae (strain ATCC 49882 / DSM 28221 / CCUG 30454 / Houston 1) (Rochalimaea henselae) protein is Translation initiation factor IF-3.